The chain runs to 267 residues: 4-diphosphocytidyl-2-C-methyl-D-erythritol kinase (267 aa).

The active site involves Lys8. Pro90–Ser100 is a binding site for ATP. Asp132 is an active-site residue.

It belongs to the GHMP kinase family. IspE subfamily.

It catalyses the reaction 4-CDP-2-C-methyl-D-erythritol + ATP = 4-CDP-2-C-methyl-D-erythritol 2-phosphate + ADP + H(+). It functions in the pathway isoprenoid biosynthesis; isopentenyl diphosphate biosynthesis via DXP pathway; isopentenyl diphosphate from 1-deoxy-D-xylulose 5-phosphate: step 3/6. Functionally, catalyzes the phosphorylation of the position 2 hydroxy group of 4-diphosphocytidyl-2C-methyl-D-erythritol. The chain is 4-diphosphocytidyl-2-C-methyl-D-erythritol kinase from Azobacteroides pseudotrichonymphae genomovar. CFP2.